The chain runs to 207 residues: Probable GTP-binding protein EngB (207 aa).

Positions 22–194 constitute an EngB-type G domain; sequence DLPEVAFAGR…LQRLDVALSD (173 aa). GTP is bound by residues 30–37, 57–61, 75–78, 142–145, and 173–175; these read GRSNVGKS, GRTQL, DLPG, TKVD, and FSA. Positions 37 and 59 each coordinate Mg(2+).

The protein belongs to the TRAFAC class TrmE-Era-EngA-EngB-Septin-like GTPase superfamily. EngB GTPase family. The cofactor is Mg(2+).

Its function is as follows. Necessary for normal cell division and for the maintenance of normal septation. This is Probable GTP-binding protein EngB from Syntrophotalea carbinolica (strain DSM 2380 / NBRC 103641 / GraBd1) (Pelobacter carbinolicus).